Reading from the N-terminus, the 180-residue chain is uncharacterized protein (180 aa).

It is found in the mitochondrion. This is an uncharacterized protein from Marchantia polymorpha (Common liverwort).